The sequence spans 385 residues: Cytochrome b (385 aa).

The next 4 membrane-spanning stretches (helical) occupy residues 32 to 52, 76 to 98, 113 to 133, and 179 to 199; these read MGSLLGLCLVIQILTGIFMAM, WLLRYTHANGASFFFAVMYMHMA, VWIIGVIIFVATMAAAFLGYC, and FFALHYLVPFIIAALVVMHFM. Positions 82 and 96 each coordinate heme b. Heme b is bound by residues H183 and H197. H202 lines the a ubiquinone pocket. A run of 4 helical transmembrane segments spans residues 225–245, 289–309, 321–341, and 348–368; these read FIFKDLITVFVFLIIFSLFVF, LLGVITMFGAILVLLVLPLTD, ISKLFFFLFVFNFILLGVLGS, and FVQMGQYATFLYFAYFLIFVP.

Belongs to the cytochrome b family. As to quaternary structure, fungal cytochrome b-c1 complex contains 10 subunits; 3 respiratory subunits, 2 core proteins and 5 low-molecular weight proteins. Cytochrome b-c1 complex is a homodimer. It depends on heme b as a cofactor.

The protein localises to the mitochondrion inner membrane. Its function is as follows. Component of the ubiquinol-cytochrome c reductase complex (complex III or cytochrome b-c1 complex) that is part of the mitochondrial respiratory chain. The b-c1 complex mediates electron transfer from ubiquinol to cytochrome c. Contributes to the generation of a proton gradient across the mitochondrial membrane that is then used for ATP synthesis. The polypeptide is Cytochrome b (COB) (Monosporozyma servazzii (Yeast)).